The sequence spans 2169 residues: Voltage-dependent L-type calcium channel subunit alpha-1C (2169 aa).

Residues 1–154 lie on the Cytoplasmic side of the membrane; that stretch reads MIRAFAQPST…RACISIVEWK (154 aa). Positions 77 to 98 are calmodulin-binding; the sequence is GAALSWLAAIDAARQAKLMGSA. The segment at 104 to 128 is disordered; that stretch reads STVSSTQRKRQQYGKPKKQGGTTAT. A compositionally biased stretch (basic residues) spans 110-121; it reads QRKRQQYGKPKK. The I repeat unit spans residues 141–438; it reads NPIRRACISI…LVLGVLSGEF (298 aa). Residues 155–173 traverse the membrane as a helical segment; sequence PFEIIILLTIFANCVALAI. The Extracellular segment spans residues 174–188; the sequence is YIPFPEDDSNATNSN. N-linked (GlcNAc...) asparagine glycosylation is present at asparagine 183. The helical transmembrane segment at 189–209 threads the bilayer; sequence LERVEYLFLIIFTVEAFLKVI. Topologically, residues 210-218 are cytoplasmic; that stretch reads AYGLLFHPN. A helical transmembrane segment spans residues 219–239; sequence AYLRNGWNLLDFIIVVVGLFS. At 240–262 the chain is on the extracellular side; sequence AILEQATKADGANALGGKGAGFD. A helical membrane pass occupies residues 263 to 281; sequence VKALRAFRVLRPLRLVSGV. At 282-298 the chain is on the cytoplasmic side; it reads PSLQVVLNSIIKAMVPL. The helical transmembrane segment at 299 to 320 threads the bilayer; the sequence is LHIALLVLFVIIIYAIIGLELF. Topologically, residues 321–380 are extracellular; the sequence is MGKMHKTCYNQEGIIDVPAEEDPSPCALETGHGRQCQNGTVCKPGWDGPKHGITNFDNFA. Intrachain disulfides connect cysteine 328/cysteine 356 and cysteine 346/cysteine 362. Asparagine 358 is a glycosylation site (N-linked (GlcNAc...) asparagine). Positions 381–402 form an intramembrane region, pore-forming; that stretch reads FAMLTVFQCITMEGWTDVLYWM. Residues 391–394 carry the Selectivity filter of repeat I motif; it reads TMEG. Glutamate 393 lines the Ca(2+) pocket. Residues 403–410 lie on the Extracellular side of the membrane; the sequence is QDAMGYEL. Residues 411–431 form a helical membrane-spanning segment; the sequence is PWVYFVSLVIFGSFFVLNLVL. Residues 432–554 lie on the Cytoplasmic side of the membrane; sequence GVLSGEFSKE…RKCRAAVKSN (123 aa). The AID/alpha-interaction domain; mediates interaction with the beta subunit stretch occupies residues 458–475; the sequence is QQLEEDLKGYLDWITQAE. A disordered region spans residues 479–511; the sequence is PENEDEGMDEDKPRNMSMPTSETESVNTENVAG. A compositionally biased stretch (polar residues) spans 495-508; the sequence is SMPTSETESVNTEN. Serine 499 is modified (phosphoserine). Threonine 506 carries the post-translational modification Phosphothreonine. An II repeat occupies 540 to 786; it reads NRFCRRKCRA…LFLAIAVDNL (247 aa). The helical transmembrane segment at 555–573 threads the bilayer; the sequence is VFYWLVIFLVFLNTLTIAS. Over 574-584 the chain is Extracellular; sequence EHYNQPHWLTE. A helical transmembrane segment spans residues 585-605; sequence VQDTANKALLALFTAEMLLKM. Residues 606 to 616 are Cytoplasmic-facing; it reads YSLGLQAYFVS. Residues 617-636 form a helical membrane-spanning segment; the sequence is LFNRFDCFIVCGGILETILV. Residues 637–645 lie on the Extracellular side of the membrane; sequence ETKIMSPLG. A helical membrane pass occupies residues 646–664; it reads ISCWRCVRLLRIFKITRYW. The Cytoplasmic portion of the chain corresponds to 665-683; that stretch reads NSLSNLVASLLNSLRSIAS. Residues 684 to 703 traverse the membrane as a helical segment; that stretch reads LLLLLFLFIIIFSLLGMQLF. The Extracellular segment spans residues 704–723; sequence GGKFNFDEMQTRRSTFDNFP. The pore-forming intramembrane region spans 724–745; that stretch reads QSLLTVFQILTGEDWNSVMYDG. The Selectivity filter of repeat II motif lies at 734–737; the sequence is TGED. Residue glutamate 736 participates in Ca(2+) binding. At 746–755 the chain is on the extracellular side; that stretch reads IMAYGGPSFP. Residues 756-775 form a helical membrane-spanning segment; it reads GMLVCIYFIILFISPNYILL. Topologically, residues 776-930 are cytoplasmic; that stretch reads NLFLAIAVDN…LQCHRIVNDT (155 aa). The interval 794–891 is disordered; that stretch reads SAQKEEEEEK…EMPVGPRPRP (98 aa). Basic and acidic residues predominate over residues 813–836; the sequence is SPEKKQEVMEKPAVEESKEEKIEL. 2 positions are modified to phosphoserine: serine 838 and serine 845. The interaction with STAC2 stretch occupies residues 859 to 906; the sequence is SENEDKSPHSNPDTAGEEDEEEPEMPVGPRPRPLSELHLKEKAVPMPE. Over residues 873–882 the composition is skewed to acidic residues; it reads AGEEDEEEPE. Residues 917-1198 form an III repeat; that stretch reads NRFRLQCHRI…IFVGFVIVTF (282 aa). A helical membrane pass occupies residues 931 to 949; sequence IFTNLILFFILLSSISLAA. Residues 950–961 lie on the Extracellular side of the membrane; it reads EDPVQHTSFRNH. The helical transmembrane segment at 962–981 threads the bilayer; it reads ILFYFDIVFTTIFTIEIALK. The Cytoplasmic portion of the chain corresponds to 982–997; it reads MTAYGAFLHKGSFCRN. Residues 998–1016 traverse the membrane as a helical segment; that stretch reads YFNILDLLVVSVSLISFGI. Residues 1017-1023 are Extracellular-facing; the sequence is QSSAINV. A helical membrane pass occupies residues 1024–1041; the sequence is VKILRVLRVLRPLRINRA. Topologically, residues 1042–1060 are cytoplasmic; the sequence is KGLKHVVQCVFVAIRTIGN. Residues 1061–1080 form a helical membrane-spanning segment; sequence IVIVTTLLQFMFACIGVQLF. At 1081–1130 the chain is on the extracellular side; it reads KGKLYTCSDSSKQTEAESKGNYITYKTGEVDHPIIQPRSWENSKFDFDNV. A dihydropyridine binding region spans residues 1118–1207; sequence RSWENSKFDF…FQEQGEQEYK (90 aa). Positions 1131–1151 form an intramembrane region, pore-forming; sequence LAAMMALFTVSTFEGWPELLY. Positions 1142–1145 match the Selectivity filter of repeat III motif; the sequence is TFEG. Glutamate 1144 is a binding site for Ca(2+). Residues 1152 to 1168 are Extracellular-facing; the sequence is RSIDSHTEDKGPIYNYR. The chain crosses the membrane as a helical span at residues 1169–1190; it reads VEISIFFIIYIIIIAFFMMNIF. Residues 1191–1248 lie on the Cytoplasmic side of the membrane; the sequence is VGFVIVTFQEQGEQEYKNCELDKNQRQCVEYALKARPLPRYIPKNQHQYKVWYVVNST. Residues 1235 to 1508 form an IV repeat; the sequence is NQHQYKVWYV…LFVAVIMDNF (274 aa). The helical transmembrane segment at 1249–1270 threads the bilayer; it reads YFEYLMFVLILLNTICLAMQHY. Residues 1271–1278 lie on the Extracellular side of the membrane; that stretch reads GQSCLFKI. Residues 1279–1300 form a helical membrane-spanning segment; sequence AMNILNMLFTGLFTVEMILKLI. The Cytoplasmic segment spans residues 1301-1310; it reads AFKPKHYFCD. Residues 1311 to 1330 form a helical membrane-spanning segment; sequence AWNTFDALIVVGSIVDIAIT. At 1331 to 1353 the chain is on the extracellular side; it reads EVHPAEHTQCSPSMSAEENSRIS. Residues 1354-1372 traverse the membrane as a helical segment; it reads ITFFRLFRVMRLVKLLSRG. Topologically, residues 1373 to 1390 are cytoplasmic; the sequence is EGIRTLLWTFIKSFQALP. Residues 1391-1411 traverse the membrane as a helical segment; it reads YVALLIVMLFFIYAVIGMQVF. The Extracellular portion of the chain corresponds to 1412–1433; the sequence is GKIALNDTTEINRNNNFQTFPQ. A glycan (N-linked (GlcNAc...) asparagine) is linked at asparagine 1417. The segment at residues 1434-1452 is an intramembrane region (pore-forming); the sequence is AVLLLFRCATGEAWQDIML. Positions 1443 to 1446 match the Selectivity filter of repeat IV motif; that stretch reads TGEA. Residues 1453–1480 are Extracellular-facing; sequence ACMPGKKCAPESEPSNSTEGETPCGSSF. A dihydropyridine binding region spans residues 1459-1527; sequence KCAPESEPSN…LGPHHLDEFK (69 aa). Cysteine 1460 and cysteine 1476 form a disulfide bridge. An N-linked (GlcNAc...) asparagine glycan is attached at asparagine 1468. Residues 1473 to 1515 form a phenylalkylamine binding region; that stretch reads ETPCGSSFAVFYFISFYMLCAFLIINLFVAVIMDNFDYLTRDW. The helical transmembrane segment at 1481 to 1505 threads the bilayer; it reads AVFYFISFYMLCAFLIINLFVAVIM. Over 1506–2169 the chain is Cytoplasmic; it reads DNFDYLTRDW…PDSRSYVSNL (664 aa). The important for interaction with STAC1, STAC2 and STAC3 stretch occupies residues 1640–1667; that stretch reads DEVTVGKFYATFLIQEYFRKFKKRKEQG. Positions 1640–1673 are calmodulin-binding; it reads DEVTVGKFYATFLIQEYFRKFKKRKEQGLVGKPS. Residues 1646–1666 form a calmodulin-binding IQ region region; sequence KFYATFLIQEYFRKFKKRKEQ. The interval 1680–1699 is important for localization in at the junctional membrane; sequence LQAGLRTLHDIGPEIRRAIS. 2 positions are modified to phosphoserine: serine 1699 and serine 1720. Polar residues-rich tracts occupy residues 1761 to 1770 and 1780 to 1792; these read KTGNNQADTE and STFTPSSYSSTGS. The disordered stretch occupies residues 1761-1793; the sequence is KTGNNQADTESPSHEKLVDSTFTPSSYSSTGSN. Position 1927 is a phosphoserine; by PKA (serine 1927). A disordered region spans residues 1970–1998; the sequence is RSHSPSTFPRPRPTPPVTPGSRGRPLQPI. Residues 1977-1987 show a composition bias toward pro residues; sequence FPRPRPTPPVT.

Belongs to the calcium channel alpha-1 subunit (TC 1.A.1.11) family. CACNA1C subfamily. As to quaternary structure, component of a calcium channel complex consisting of a pore-forming alpha subunit (CACNA1C) and ancillary beta, gamma and delta subunits. The channel complex contains alpha, beta, gamma and delta subunits in a 1:1:1:1 ratio, i.e. it contains only one of each type of subunit. CACNA1C channel activity is modulated by ancillary subunits, such as CACNB1, CACNB2, CACNB3, CACNA2D1 and CACNA2D4. Interacts with the gamma subunits CACNG4, CACNG6, CACNG7 and CACNG8. Interacts with CACNB1. Interacts with CACNB2. Identified in a complex with CACNA2D4 and CACNB3. Interacts with CACNB3. Interacts with CACNA2D1. Interacts with CACNA2D4. Interacts with CALM1. Interacts (via the N-terminus and the C-terminal C and IQ motifs) with CABP1; this inhibits Ca(2+)-dependent channel inactivation. The binding via the C motif is calcium independent whereas the binding via IQ requires the presence of calcium and is mutually exclusive with calmodulin binding. The binding to the cytoplasmic N-terminal domain is calcium independent but is essential for the channel modulation. Interacts (via C-terminal CDB motif) with CABP5; in a calcium-dependent manner. Interacts with CIB1; the interaction increases upon cardiomyocytes hypertrophy. Interacts with STAC2 and STAC3; this inhibits channel inactivation. Post-translationally, phosphorylation by PKA at Ser-1927 activates the channel. Elevated levels of blood glucose lead to increased phosphorylation by PKA. Is also phosphorylated in vitro by CaM-kinase II, PKC and CGPK. As to expression, detected in hippocampus and brain cortex, on neuronal cell bodies and dendrites, and in post-synaptic density in brain (at protein level). Isoforms 4 and 5 are expressed throughout the central nervous system, with highest levels in the olfactory bulb and cerebellum. Also expressed in heart, pituitary, adrenal gland, liver, kidney, and in a much lesser extent in testes and spleen.

The protein resides in the cell membrane. It is found in the sarcolemma. The protein localises to the perikaryon. Its subcellular location is the postsynaptic density membrane. It localises to the cell projection. The protein resides in the dendrite. It is found in the T-tubule. It carries out the reaction Ca(2+)(in) = Ca(2+)(out). With respect to regulation, inhibited by dihydropyridines (DHP), such as isradipine. Inhibited by nifedipine. Channel activity is regulated by Ca(2+) and calmodulin. Binding of STAC1, STAC2 or STAC3 to a region that overlaps with the calmodulin binding site inhibits channel inactivation by Ca(2+) and calmodulin. Binding of calmodulin or CABP1 at the same regulatory sites results in opposite effects on the channel function. Shear stress and pressure increases calcium channel activity. Its function is as follows. Pore-forming, alpha-1C subunit of the voltage-gated calcium channel that gives rise to L-type calcium currents. Mediates influx of calcium ions into the cytoplasm, and thereby triggers calcium release from the sarcoplasm. Plays an important role in excitation-contraction coupling in the heart. Required for normal heart development and normal regulation of heart rhythm. Required for normal contraction of smooth muscle cells in blood vessels and in the intestine. Essential for normal blood pressure regulation via its role in the contraction of arterial smooth muscle cells. Long-lasting (L-type) calcium channels belong to the 'high-voltage activated' (HVA) group. The protein is Voltage-dependent L-type calcium channel subunit alpha-1C (Cacna1c) of Rattus norvegicus (Rat).